The chain runs to 751 residues: Meiotic sister-chromatid recombination protein 3 (751 aa).

5 disordered regions span residues 54–88 (GVGMGRTQSLTGYGRTRSLGAARPSYLGAPPRTYS), 216–290 (LRAP…KKQM), 314–410 (PALE…EARF), 431–504 (TQEN…RPSF), and 558–610 (KDVP…SPPQ). Low complexity predominate over residues 216-228 (LRAPPRVQQQRQL). 2 stretches are compositionally biased toward basic and acidic residues: residues 345 to 356 (ERSRPAKREVRK) and 384 to 393 (ERVHNKEKTL). The span at 431 to 496 (TQENSTRDNG…GCETGNTTPK (66 aa)) shows a compositional bias: polar residues. Over residues 596-609 (RSSISSSPRRSSPP) the composition is skewed to low complexity.

The protein localises to the cell membrane. Its function is as follows. May be involved in the control of meiotic sister-chromatid recombination. This chain is Meiotic sister-chromatid recombination protein 3 (MSC3), found in Eremothecium gossypii (strain ATCC 10895 / CBS 109.51 / FGSC 9923 / NRRL Y-1056) (Yeast).